We begin with the raw amino-acid sequence, 267 residues long: Mitochondrial S-adenosylmethionine carrier protein (267 aa).

Solcar repeat units lie at residues arginine 4–valine 77, leucine 86–valine 168, and leucine 177–threonine 265. A run of 6 helical transmembrane segments spans residues glutamate 5 to phenylalanine 25, isoleucine 49 to valine 69, asparagine 85 to isoleucine 105, arginine 142 to tryptophan 162, alanine 182 to valine 202, and phenylalanine 238 to alanine 258.

The protein belongs to the mitochondrial carrier (TC 2.A.29) family.

Its subcellular location is the mitochondrion inner membrane. The enzyme catalyses S-adenosyl-L-homocysteine(out) + S-adenosyl-L-methionine(in) = S-adenosyl-L-homocysteine(in) + S-adenosyl-L-methionine(out). Its function is as follows. Mitochondrial S-adenosyl-L-methionine/S-adenosyl-L-homocysteine antiporter. Mediates the exchange of cytosolic S-adenosyl-L-methionine, the predominant methyl-group donor for macromolecule methylation processes, for mitochondrial S-adenosylhomocysteine(SAH), a by-product of methylation reactions. The polypeptide is Mitochondrial S-adenosylmethionine carrier protein (slc25a26) (Danio rerio (Zebrafish)).